The sequence spans 474 residues: Trehalose-6-phosphate synthase (474 aa).

Arg-10 serves as a coordination point for D-glucose 6-phosphate. Residue 22 to 23 participates in UDP-alpha-D-glucose binding; the sequence is GG. Residues Tyr-77 and Asp-131 each coordinate D-glucose 6-phosphate. The UDP-alpha-D-glucose site is built by Arg-263 and Lys-268. Arg-301 contributes to the D-glucose 6-phosphate binding site. UDP-alpha-D-glucose contacts are provided by residues Phe-340 and 366 to 370; that span reads LVAKE.

Belongs to the glycosyltransferase 20 family. As to quaternary structure, homotetramer.

It catalyses the reaction D-glucose 6-phosphate + UDP-alpha-D-glucose = alpha,alpha-trehalose 6-phosphate + UDP + H(+). It functions in the pathway glycan biosynthesis; trehalose biosynthesis. In terms of biological role, probably involved in the osmoprotection via the biosynthesis of trehalose. Catalyzes the transfer of glucose from UDP-alpha-D-glucose (UDP-Glc) to D-glucose 6-phosphate (Glc-6-P) to form trehalose-6-phosphate. Acts with retention of the anomeric configuration of the UDP-sugar donor. The protein is Trehalose-6-phosphate synthase of Escherichia coli O157:H7.